The sequence spans 457 residues: Serine/threonine-protein phosphatase 2A activator 2 (457 aa).

2 disordered regions span residues aspartate 387–glutamine 407 and alanine 426–aspartate 457. Residues histidine 391–alanine 400 are compositionally biased toward basic residues.

The protein belongs to the PTPA-type PPIase family.

Its subcellular location is the cytoplasm. The catalysed reaction is [protein]-peptidylproline (omega=180) = [protein]-peptidylproline (omega=0). Its function is as follows. PPIases accelerate the folding of proteins. It catalyzes the cis-trans isomerization of proline imidic peptide bonds in oligopeptides. Acts as a regulatory subunit for PP2A-like phosphatases modulating their activity or substrate specificity, probably by inducing a conformational change in the catalytic subunit, a direct target of the PPIase. Can reactivate inactive phosphatase PP2A-phosphatase methylesterase complexes (PP2Ai) in presence of ATP and Mg(2+) by dissociating the inactive form from the complex. The sequence is that of Serine/threonine-protein phosphatase 2A activator 2 (RRD2) from Mycosarcoma maydis (Corn smut fungus).